We begin with the raw amino-acid sequence, 315 residues long: Olfactory receptor 4A5 (315 aa).

Topologically, residues 1-23 (MRQNNNITEFVLLGFSQDPGVQK) are extracellular. The N-linked (GlcNAc...) asparagine glycan is linked to asparagine 6. A helical membrane pass occupies residues 24–47 (ALFVMFLLTYLVTVVGNLLIVVDI). The Cytoplasmic segment spans residues 48-55 (IASPSLGS). A helical transmembrane segment spans residues 56 to 77 (PMYFFLACLSFIDAAYSTTISP). Residues 78–98 (KLIVGLFCDKKTISFQGCMGQ) are Extracellular-facing. The cysteines at positions 95 and 186 are disulfide-linked. Residues 99-118 (LFIDHFFGGAEVFLLVVMAC) traverse the membrane as a helical segment. The Cytoplasmic segment spans residues 119-137 (DRYVAICKPLHYLTIMNRQ). The helical transmembrane segment at 138–156 (VCFLLLVVAMIGGFVHSAF) threads the bilayer. Residues 157–192 (QIVVYSLPFCGPNVIVHFSCDMHPLLELACTDTYFI) are Extracellular-facing. A helical transmembrane segment spans residues 193–216 (GLTVVVNSGAICMVIFNLLLISYG). The Cytoplasmic segment spans residues 217–232 (VILSSLKTYSQEKRGK). A helical membrane pass occupies residues 233–255 (ALSTCSSGSTVVVLFFVPCIFIY). At 256-266 (VRPVSNFPTDK) the chain is on the extracellular side. The chain crosses the membrane as a helical span at residues 267–286 (FMTVFYTIITHMLSPLIYTL). The Cytoplasmic portion of the chain corresponds to 287-315 (RNSEMRNAIEKLLGKKLTIFIIGGVSVLM).

Belongs to the G-protein coupled receptor 1 family.

The protein resides in the cell membrane. Functionally, odorant receptor. This Homo sapiens (Human) protein is Olfactory receptor 4A5 (OR4A5).